The primary structure comprises 196 residues: Crossover junction endodeoxyribonuclease RuvC (196 aa).

Catalysis depends on residues D23, E83, and H156. Residues D23, E83, and H156 each coordinate Mg(2+).

Belongs to the RuvC family. In terms of assembly, homodimer which binds Holliday junction (HJ) DNA. The HJ becomes 2-fold symmetrical on binding to RuvC with unstacked arms; it has a different conformation from HJ DNA in complex with RuvA. In the full resolvosome a probable DNA-RuvA(4)-RuvB(12)-RuvC(2) complex forms which resolves the HJ. Mg(2+) is required as a cofactor.

The protein localises to the cytoplasm. It catalyses the reaction Endonucleolytic cleavage at a junction such as a reciprocal single-stranded crossover between two homologous DNA duplexes (Holliday junction).. The RuvA-RuvB-RuvC complex processes Holliday junction (HJ) DNA during genetic recombination and DNA repair. Endonuclease that resolves HJ intermediates. Cleaves cruciform DNA by making single-stranded nicks across the HJ at symmetrical positions within the homologous arms, yielding a 5'-phosphate and a 3'-hydroxyl group; requires a central core of homology in the junction. The consensus cleavage sequence is 5'-(A/T)TT(C/G)-3'. Cleavage occurs on the 3'-side of the TT dinucleotide at the point of strand exchange. HJ branch migration catalyzed by RuvA-RuvB allows RuvC to scan DNA until it finds its consensus sequence, where it cleaves and resolves the cruciform DNA. The sequence is that of Crossover junction endodeoxyribonuclease RuvC from Treponema pallidum (strain Nichols).